Reading from the N-terminus, the 606-residue chain is Putative helicase 172L (606 aa).

The region spanning 59-264 is the Helicase ATP-binding domain; it reads GEKTWGVRGG…WAQLRFCGYK (206 aa). Position 72–79 (72–79) interacts with ATP; it reads LCMGLGKT. One can recognise a Helicase C-terminal domain in the interval 437–586; the sequence is YIKSSNFEIS…ASYLEGKERI (150 aa).

It belongs to the SNF2/RAD54 helicase family.

The polypeptide is Putative helicase 172L (Invertebrate iridescent virus 6 (IIV-6)).